Reading from the N-terminus, the 520-residue chain is ADP,ATP carrier protein 4 (520 aa).

12 helical membrane passes run 43-63, 80-100, 111-131, 166-186, 201-221, 240-260, 305-325, 339-359, 370-390, 399-419, 462-482, and 485-505; these read LSKF…QNLI, ISFL…AIYV, IFYL…YVIF, FSLF…LLFW, FYPL…QFLE, FHTL…IVGI, LIAT…GPWK, AAFI…FVVL, FTAA…FFAV, LIVA…IGAI, LGKS…PSAS, and SISV…FWAV.

It belongs to the ADP/ATP translocase tlc family.

It localises to the cell membrane. Its function is as follows. Provides the rickettsial cell with host ATP in exchange for rickettsial ADP. This is an obligate exchange system. This energy acquiring activity is an important component of rickettsial parasitism. The sequence is that of ADP,ATP carrier protein 4 (tlcD) from Rickettsia bellii (strain RML369-C).